The sequence spans 261 residues: Transmembrane and immunoglobulin domain-containing protein 1 (261 aa).

The first 27 residues, 1–27 (MAQKTSGLIQRCRFLLLMILFLPHVMT), serve as a signal peptide directing secretion. An Ig-like C2-type 1 domain is found at 28 to 114 (SSVLSVNGKT…LQRNQSVSIS (87 aa)). Residues 28–219 (SSVLSVNGKT…IVKDKGSTVP (192 aa)) lie on the Extracellular side of the membrane. A disulfide bridge connects residues C54 and C103. N83, N108, N118, and N189 each carry an N-linked (GlcNAc...) asparagine glycan. The 87-residue stretch at 122–208 (PPLLSGNDFQ…LIETKTKDFH (87 aa)) folds into the Ig-like C2-type 2 domain. C143 and C194 are disulfide-bonded. Residues 220–240 (IEPIIAACVVVFLTLVFGVIA) form a helical membrane-spanning segment. At 241–261 (RRKRIMKLCRKDQGPQCRTAL) the chain is on the cytoplasmic side.

In terms of assembly, homodimer. In terms of processing, N-glycosylated.

Its subcellular location is the cell membrane. The protein resides in the cytoplasm. Its function is as follows. May control cell-cell adhesion, cell migration and proliferation, cell morphology, and protects renal epithelial cells from oxidative cell injury to promote cell survival. The protein is Transmembrane and immunoglobulin domain-containing protein 1 of Bos taurus (Bovine).